A 352-amino-acid polypeptide reads, in one-letter code: Protein-glutamate methylesterase/protein-glutamine glutaminase 2 (352 aa).

One can recognise a Response regulatory domain in the interval 1-116; sequence MVVDDSAVVR…KQFLTDSADE (116 aa). Asp50 is subject to 4-aspartylphosphate. One can recognise a CheB-type methylesterase domain in the interval 162 to 352; that stretch reads AQTTERIVAI…MAREIVTQLQ (191 aa). Residues Ser174, His200, and Asp296 contribute to the active site.

This sequence belongs to the CheB family. Phosphorylated by CheA. Phosphorylation of the N-terminal regulatory domain activates the methylesterase activity.

The protein resides in the cytoplasm. The catalysed reaction is [protein]-L-glutamate 5-O-methyl ester + H2O = L-glutamyl-[protein] + methanol + H(+). The enzyme catalyses L-glutaminyl-[protein] + H2O = L-glutamyl-[protein] + NH4(+). Its function is as follows. Involved in chemotaxis. Part of a chemotaxis signal transduction system that modulates chemotaxis in response to various stimuli. Catalyzes the demethylation of specific methylglutamate residues introduced into the chemoreceptors (methyl-accepting chemotaxis proteins or MCP) by CheR. Also mediates the irreversible deamidation of specific glutamine residues to glutamic acid. The sequence is that of Protein-glutamate methylesterase/protein-glutamine glutaminase 2 from Xanthomonas euvesicatoria pv. vesicatoria (strain 85-10) (Xanthomonas campestris pv. vesicatoria).